A 475-amino-acid polypeptide reads, in one-letter code: MNTVLAQQIANEGGVEAWMIAQQHKSLLRFLTCGSVDDGKSTLIGRLLHDTRQIYEDQLSSLHNDSKRHGTQGEKLDLALLVDGLQAEREQGITIDVAYRYFSTEKRKFIIADTPGHEQYTRNMATGASTCELAILLIDARKGVLDQTRRHSFISTLLGIKHLVVAINKMDLVDYSEETFTRIREDYLTFAGQLPGNLDIRFVPLSALEGDNVASQSESMPWYSGLTLLEVLETVEIQRVVDAQPMRFPVQYVNRPNLDFRGYAGMLASGRVEVGQRVKVLPSGVESNVARIVTFDGDREEVFAGEAITLVLTDEIDISRGDLLLAADEALPAVQSASVDVVWMAEQPLSPGQSYDIKIAGKKTRARVDGIRYQVDINNLTQREVENLPLNGIGLVDLTFDEPLVLDRYQQNPVTGGLIFIDRLSNVTVGAGMVHEPVSQATAASSEFSAFELELNALVRRHFPHWGARDLLGDK.

The 215-residue stretch at 25–239 folds into the tr-type G domain; it reads KSLLRFLTCG…EVLETVEIQR (215 aa). A G1 region spans residues 34–41; the sequence is GSVDDGKS. Residue 34–41 participates in GTP binding; the sequence is GSVDDGKS. The G2 stretch occupies residues 92–96; it reads GITID. Residues 113–116 form a G3 region; that stretch reads DTPG. GTP-binding positions include 113–117 and 168–171; these read DTPGH and NKMD. A G4 region spans residues 168 to 171; the sequence is NKMD. Positions 206–208 are G5; that stretch reads SAL.

This sequence belongs to the TRAFAC class translation factor GTPase superfamily. Classic translation factor GTPase family. CysN/NodQ subfamily. In terms of assembly, heterodimer composed of CysD, the smaller subunit, and CysN.

It carries out the reaction sulfate + ATP + H(+) = adenosine 5'-phosphosulfate + diphosphate. Its pathway is sulfur metabolism; hydrogen sulfide biosynthesis; sulfite from sulfate: step 1/3. In terms of biological role, with CysD forms the ATP sulfurylase (ATPS) that catalyzes the adenylation of sulfate producing adenosine 5'-phosphosulfate (APS) and diphosphate, the first enzymatic step in sulfur assimilation pathway. APS synthesis involves the formation of a high-energy phosphoric-sulfuric acid anhydride bond driven by GTP hydrolysis by CysN coupled to ATP hydrolysis by CysD. The chain is Sulfate adenylyltransferase subunit 1 from Shigella flexneri.